A 158-amino-acid chain; its full sequence is 6,7-dimethyl-8-ribityllumazine synthase (158 aa).

Residues F22, 57–59 (AYE), and 84–86 (TVI) contribute to the 5-amino-6-(D-ribitylamino)uracil site. 89–90 (GT) is a (2S)-2-hydroxy-3-oxobutyl phosphate binding site. H92 acts as the Proton donor in catalysis. Position 117 (F117) interacts with 5-amino-6-(D-ribitylamino)uracil. Residue R131 participates in (2S)-2-hydroxy-3-oxobutyl phosphate binding.

It belongs to the DMRL synthase family. As to quaternary structure, forms an icosahedral capsid composed of 60 subunits, arranged as a dodecamer of pentamers.

It carries out the reaction (2S)-2-hydroxy-3-oxobutyl phosphate + 5-amino-6-(D-ribitylamino)uracil = 6,7-dimethyl-8-(1-D-ribityl)lumazine + phosphate + 2 H2O + H(+). It participates in cofactor biosynthesis; riboflavin biosynthesis; riboflavin from 2-hydroxy-3-oxobutyl phosphate and 5-amino-6-(D-ribitylamino)uracil: step 1/2. Catalyzes the formation of 6,7-dimethyl-8-ribityllumazine by condensation of 5-amino-6-(D-ribitylamino)uracil with 3,4-dihydroxy-2-butanone 4-phosphate. This is the penultimate step in the biosynthesis of riboflavin. This Pectobacterium carotovorum subsp. carotovorum (strain PC1) protein is 6,7-dimethyl-8-ribityllumazine synthase.